A 360-amino-acid polypeptide reads, in one-letter code: Phosphoserine aminotransferase (360 aa).

L-glutamate is bound at residue Arg-42. Residues Trp-102, Thr-152, Asp-171, and Gln-194 each contribute to the pyridoxal 5'-phosphate site. Lys-195 carries the N6-(pyridoxal phosphate)lysine modification. A pyridoxal 5'-phosphate-binding site is contributed by Asn-237–Thr-238.

This sequence belongs to the class-V pyridoxal-phosphate-dependent aminotransferase family. SerC subfamily. In terms of assembly, homodimer. Pyridoxal 5'-phosphate is required as a cofactor.

The protein resides in the cytoplasm. The enzyme catalyses O-phospho-L-serine + 2-oxoglutarate = 3-phosphooxypyruvate + L-glutamate. It catalyses the reaction 4-(phosphooxy)-L-threonine + 2-oxoglutarate = (R)-3-hydroxy-2-oxo-4-phosphooxybutanoate + L-glutamate. The protein operates within amino-acid biosynthesis; L-serine biosynthesis; L-serine from 3-phospho-D-glycerate: step 2/3. It functions in the pathway cofactor biosynthesis; pyridoxine 5'-phosphate biosynthesis; pyridoxine 5'-phosphate from D-erythrose 4-phosphate: step 3/5. In terms of biological role, catalyzes the reversible conversion of 3-phosphohydroxypyruvate to phosphoserine and of 3-hydroxy-2-oxo-4-phosphonooxybutanoate to phosphohydroxythreonine. This is Phosphoserine aminotransferase from Coxiella burnetii (strain CbuK_Q154) (Coxiella burnetii (strain Q154)).